Consider the following 179-residue polypeptide: MARPSPLCLLLLLTLLPPIVPSNSLLTEPPFRWRFYLHETWTQGNWLSTVTLATVDCQPHGCQAQVTFNFTSFKSVLRGWSNPTICFVYDQTHSNCRDYWADTNGGCPYAYCHMHVTQLDTAKKLQHTYRLTSDGRTTYFLTIPDPWDSRWVSRVTGRLYQWPTDSYPVSKLRIFRTYV.

An N-terminal signal peptide occupies residues 1 to 22 (MARPSPLCLLLLLTLLPPIVPS). The interval 23-179 (NSLLTEPPFR…SKLRIFRTYV (157 aa)) is truncated surface protein. An N-linked (GlcNAc...) asparagine glycan is attached at N69.

This sequence belongs to the gamma type-C retroviral envelope protein family. HERV class-I F(c)1 env subfamily.

It is found in the virion. Its function is as follows. Retroviral envelope proteins mediate receptor recognition and membrane fusion during early infection. Endogenous envelope proteins may have kept, lost or modified their original function during evolution. This chain is Putative endogenous retrovirus group FC1 Env polyprotein (ERVFC1), found in Gorilla gorilla gorilla (Western lowland gorilla).